The sequence spans 1393 residues: DNA-directed RNA polymerase subunit beta' (1393 aa).

Cys72, Cys74, Cys87, and Cys90 together coordinate Zn(2+). The Mg(2+) site is built by Asp463, Asp465, and Asp467. 4 residues coordinate Zn(2+): Cys812, Cys887, Cys894, and Cys897.

Belongs to the RNA polymerase beta' chain family. The RNAP catalytic core consists of 2 alpha, 1 beta, 1 beta' and 1 omega subunit. When a sigma factor is associated with the core the holoenzyme is formed, which can initiate transcription. Mg(2+) is required as a cofactor. Requires Zn(2+) as cofactor.

The catalysed reaction is RNA(n) + a ribonucleoside 5'-triphosphate = RNA(n+1) + diphosphate. In terms of biological role, DNA-dependent RNA polymerase catalyzes the transcription of DNA into RNA using the four ribonucleoside triphosphates as substrates. The polypeptide is DNA-directed RNA polymerase subunit beta' (Chlamydia caviae (strain ATCC VR-813 / DSM 19441 / 03DC25 / GPIC) (Chlamydophila caviae)).